The following is a 379-amino-acid chain: Armadillo repeat-containing X-linked protein 3 (379 aa).

The Mitochondrial intermembrane portion of the chain corresponds to 1–6 (MGYARK). Mitochondrion outer membrane (MOM)-targeting sequence stretches follow at residues 1–6 (MGYARK) and 26–37 (RLTRGRKQNKEK). Residues 7–29 (VGWVTAGLVIGAGACYCIYRLTR) traverse the membrane as a helical; Signal-anchor segment. The Cytoplasmic portion of the chain corresponds to 30–379 (GRKQNKEKMA…AEHMFPKSQE (350 aa)). Phosphoserine is present on residues Ser-61, Ser-67, and Ser-72. Residues 89–98 (RARARARARA) form a nuclear localization signal region. A compositionally biased stretch (basic residues) spans 95–106 (RARATRARRAVQ). The segment at 95–116 (RARATRARRAVQKRASPNSDDT) is disordered. Residue Ser-110 is modified to Phosphoserine. ARM repeat units follow at residues 111-151 (PNSD…NNAA), 153-192 (AFNR…NLSV), and 233-272 (VTNE…NLAE).

Belongs to the eutherian X-chromosome-specific Armcx family. In terms of assembly, interacts (via ARM domain) with MIRO1, MIRO2 and TRAK2. The interaction with Miro is calcium-dependent. Interacts with SOX10.

It is found in the mitochondrion outer membrane. The protein resides in the cytoplasm. Its subcellular location is the nucleus. Functionally, regulates mitochondrial aggregation and transport in axons in living neurons. May link mitochondria to the TRAK2-kinesin motor complex via its interaction with Miro and TRAK2. Mitochondrial distribution and dynamics is regulated through ARMCX3 protein degradation, which is promoted by PCK and negatively regulated by WNT1. Enhances the SOX10-mediated transactivation of the neuronal acetylcholine receptor subunit alpha-3 and beta-4 subunit gene promoters. This is Armadillo repeat-containing X-linked protein 3 (ARMCX3) from Homo sapiens (Human).